We begin with the raw amino-acid sequence, 249 residues long: DNA polymerase sliding clamp (249 aa).

The protein belongs to the PCNA family. Homotrimer which circularizes head-to-tail (head is a N-terminus, tail is at C-terminus) to form a toroid. RFC opens the toroid so it can load on DNA. Interacts with both Pol I (pol) and Pol II (polB-polC), with Hel308 (hjm) and with Hjc. Interaction with the C-terminal PIP-box of RfcL may stabilize the toroidal structure.

Sliding clamp subunit that acts as a moving platform for DNA processing. Responsible for tethering the catalytic subunit of DNA polymerase to DNA during high-speed replication. Unlike its eukaryotic paralog, loads on circular DNA without the replication factor C (RFC) clamp loader, although RFC greatly increases loading efficiency. Stimulates the ATPase activity of replication factor C (RFC) in the presence of ssDNA. Stimulates the helicase activity of Hel308 and may alter its substrate specificity. In Pyrococcus furiosus (strain ATCC 43587 / DSM 3638 / JCM 8422 / Vc1), this protein is DNA polymerase sliding clamp.